The chain runs to 470 residues: Uronate isomerase (470 aa).

This sequence belongs to the metallo-dependent hydrolases superfamily. Uronate isomerase family.

The catalysed reaction is D-glucuronate = D-fructuronate. The enzyme catalyses aldehydo-D-galacturonate = keto-D-tagaturonate. The protein operates within carbohydrate metabolism; pentose and glucuronate interconversion. In Salmonella newport (strain SL254), this protein is Uronate isomerase.